The chain runs to 220 residues: Chloramphenicol acetyltransferase (220 aa).

Catalysis depends on H187, which acts as the Proton acceptor.

Belongs to the chloramphenicol acetyltransferase family. Homotrimer.

It carries out the reaction chloramphenicol + acetyl-CoA = chloramphenicol 3-acetate + CoA. Functionally, this enzyme is an effector of chloramphenicol resistance in bacteria. The chain is Chloramphenicol acetyltransferase (cat86) from Bacillus pumilus (Bacillus mesentericus).